The following is a 439-amino-acid chain: Probable anion transporter 7 (439 aa).

The signal sequence occupies residues 1–28; sequence MTALTRMKFPKRYVIVLLTFICTNVCYI. 11 consecutive transmembrane segments (helical) span residues 53 to 73, 81 to 101, 104 to 124, 143 to 163, 167 to 187, 232 to 252, 280 to 300, 312 to 332, 338 to 358, 367 to 387, and 412 to 432; these read MILSMFYYGYVLSQIPGGWAA, VLLLSFVLWSLICGLIPLDPK, VILVLSRLFVGVAQGFIFPAI, LTTSGMYLGAAGGMLFFPSLV, GAQSVFFVEAVLGVAWSVIWL, IIFSLPVWAIVVNNFTFHYAL, LPYFNMFIFSNIGGVVADHLI, KLLNTIGFVVSAVALMALPLF, TVLCSSISLGFLALGRAGFAV, FAGIVMGVSNTAGTLAGIVGV, and TVFFVPGYLCIFSSIIFLIFS.

Belongs to the major facilitator superfamily. Sodium/anion cotransporter (TC 2.A.1.14) family.

Its subcellular location is the cell membrane. Its function is as follows. Probable anion transporter. This Oryza sativa subsp. japonica (Rice) protein is Probable anion transporter 7 (PHT4;7).